A 481-amino-acid chain; its full sequence is Endoplasmic reticulum lectin 1 (481 aa).

An N-terminal signal peptide occupies residues 1-27 (MRRSDRLRCAGASLLVVLCGVFRSSFG). 2 MRH domains span residues 108–245 (SSCS…LCNH) and 340–467 (SYCF…ICKI). Intrachain disulfides connect C110–C123, C198–C231, C214–C243, C342–C355, C419–C453, and C434–C465.

It localises to the endoplasmic reticulum lumen. Probable lectin that binds selectively to improperly folded lumenal proteins. May function in endoplasmic reticulum quality control and endoplasmic reticulum-associated degradation (ERAD) of both non-glycosylated proteins and glycoproteins. This chain is Endoplasmic reticulum lectin 1 (erlec1), found in Xenopus tropicalis (Western clawed frog).